A 252-amino-acid chain; its full sequence is Tumor necrosis factor ligand superfamily member 15 (252 aa).

Residues 1-39 are Cytoplasmic-facing; that stretch reads MAEELGLGFGEAVPVEMLPEGCRHRREARTGLAARSKAC. The helical; Signal-anchor for type II membrane protein transmembrane segment at 40–60 threads the bilayer; sequence LALTCCLLSFPILAGLSTLLM. Topologically, residues 61-252 are extracellular; the sequence is TGQLRIPGKD…DKTFFGAFLI (192 aa). The THD domain occupies 96–252; it reads PKAHLTIMRQ…DKTFFGAFLI (157 aa). N-linked (GlcNAc...) asparagine glycosylation occurs at N134. C163 and C203 are oxidised to a cystine. A glycan (N-linked (GlcNAc...) asparagine) is linked at N230.

The protein belongs to the tumor necrosis factor family. In terms of assembly, homotrimer.

It is found in the membrane. Receptor for TNFRSF25 and TNFRSF6B. Mediates activation of NF-kappa-B. Inhibits vascular endothelial growth and angiogenesis (in vitro). Promotes activation of caspases and apoptosis. Promotes splenocyte alloactivation. The sequence is that of Tumor necrosis factor ligand superfamily member 15 (Tnfsf15) from Rattus norvegicus (Rat).